Here is a 631-residue protein sequence, read N- to C-terminus: Tumor protein p73 (631 aa).

The tract at residues 1–43 is transactivation; it reads MAQTSSSSSSTFEHLWSSLEPDSTYFDLPQPSQGTSEASGSEE. Disordered regions lie at residues 23–43 and 69–113; these read STYF…GSEE and SRAA…NTDY. Threonine 24 is subject to Phosphothreonine; by PLK1. Tyrosine 25 carries the phosphotyrosine; by SRC and HCK modification. Polar residues-rich tracts occupy residues 30-43 and 86-100; these read QPSQ…GSEE and PTHS…TFDT. Tyrosine 91 carries the phosphotyrosine; by ABL1 modification. The DNA-binding stretch occupies residues 123–302; the sequence is FQQSSTAKSA…DRKADEDHYR (180 aa). Cysteine 186, histidine 189, cysteine 250, and cysteine 254 together coordinate Zn(2+). Residues 306–315 show a composition bias toward polar residues; the sequence is ALNESTTKNG. A disordered region spans residues 306–334; it reads ALNESTTKNGAASKRAFKQSPPAIPALGT. The interval 337-372 is interaction with HIPK2; it reads KKRRHGDEDMFYMHVRGRENFEILMKVKESLELMEL. The tract at residues 337–378 is oligomerization; that stretch reads KKRRHGDEDMFYMHVRGRENFEILMKVKESLELMELVPQPLV. A PPxY motif motif is present at residues 477–481; the sequence is PPPPY. An SAM domain is found at 479-545; sequence PPYHADPSLV…WRGLQDLKQS (67 aa). Lysine 622 participates in a covalent cross-link: Glycyl lysine isopeptide (Lys-Gly) (interchain with G-Cter in SUMO); alternate. Lysine 622 is covalently cross-linked (Glycyl lysine isopeptide (Lys-Gly) (interchain with G-Cter in SUMO2); alternate).

Belongs to the p53 family. In terms of assembly, found in a complex with p53/TP53 and CABLES1. The C-terminal oligomerization domain binds to the ABL1 tyrosine kinase SH3 domain. Interacts with HECW2, HIPK2, RANBP9 and WWOX. Interacts (via SAM domain) with FBXO45 (via B30.2/SPRY domain). Interacts with YAP1 (phosphorylated form). Interacts with HCK (via SH3 domain); this inhibits TP73 activity and degradation. Interacts (via SAM domain) with NQO1; this interaction is NADH-dependent, stabilizes TP73 in response to oxidative stress and protects it from ubiquitin-independent degradation by the 20S proteasome. It depends on Zn(2+) as a cofactor. In terms of processing, sumoylated on Lys-622, which potentiates proteasomal degradation but does not affect transcriptional activity. Post-translationally, phosphorylation by PLK1 and PLK3 inhibits the transcription regulator activity and pro-apoptotic function. Higher levels of phosphorylation seen in striatal neurons of. mutant huntingtin (htt) transgenic mice. Polyubiquitinated by RCHY1/PIRH2; leading to its degradation by the proteasome. In terms of tissue distribution, found in striatal neurons of mutant huntingtin (htt) transgenic mice (at protein level). Isoform 1 is expressed in the nasal epithelium, the vomeronasal organ, the hippocampus and the hypothalamus.

Its subcellular location is the nucleus. The protein resides in the cytoplasm. Functionally, participates in the apoptotic response to DNA damage. Isoforms containing the transactivation domain are pro-apoptotic, isoforms lacking the domain are anti-apoptotic and block the function of p53 and transactivating p73 isoforms. May be a tumor suppressor protein. Is an activator of FOXJ1 expression, essential for the positive regulation of lung ciliated cell differentiation. The sequence is that of Tumor protein p73 (Tp73) from Mus musculus (Mouse).